The chain runs to 72 residues: Keratin-associated protein 19-5 (72 aa).

It belongs to the KRTAP type 19 family. As to quaternary structure, interacts with hair keratins.

Functionally, in the hair cortex, hair keratin intermediate filaments are embedded in an interfilamentous matrix, consisting of hair keratin-associated proteins (KRTAP), which are essential for the formation of a rigid and resistant hair shaft through their extensive disulfide bond cross-linking with abundant cysteine residues of hair keratins. The matrix proteins include the high-sulfur and high-glycine-tyrosine keratins. The protein is Keratin-associated protein 19-5 (KRTAP19-5) of Homo sapiens (Human).